A 119-amino-acid chain; its full sequence is Large ribosomal subunit protein uL22 (119 aa).

This sequence belongs to the universal ribosomal protein uL22 family. In terms of assembly, part of the 50S ribosomal subunit.

Its function is as follows. This protein binds specifically to 23S rRNA; its binding is stimulated by other ribosomal proteins, e.g. L4, L17, and L20. It is important during the early stages of 50S assembly. It makes multiple contacts with different domains of the 23S rRNA in the assembled 50S subunit and ribosome. In terms of biological role, the globular domain of the protein is located near the polypeptide exit tunnel on the outside of the subunit, while an extended beta-hairpin is found that lines the wall of the exit tunnel in the center of the 70S ribosome. The sequence is that of Large ribosomal subunit protein uL22 from Bifidobacterium longum (strain DJO10A).